We begin with the raw amino-acid sequence, 72 residues long: Defensin-like protein 230 (72 aa).

The first 27 residues, 1–27 (MEKKSLACLSFLLLVLFVAQEIVVSEA), serve as a signal peptide directing secretion. Intrachain disulfides connect Cys30–Cys72, Cys41–Cys60, Cys45–Cys66, and Cys49–Cys68.

The protein belongs to the DEFL family.

The protein resides in the secreted. The chain is Defensin-like protein 230 (PI230) from Pisum sativum (Garden pea).